Reading from the N-terminus, the 412-residue chain is Probable beta-1,4-xylosyltransferase IRX10 (412 aa).

A helical; Signal-anchor for type II membrane protein membrane pass occupies residues 1 to 21 (MKIHSCLSAILLFLFFSASSA). Topologically, residues 22-412 (KQNVRTERIS…AGPVADLKPW (391 aa)) are lumenal. Asn139 and Asn400 each carry an N-linked (GlcNAc...) asparagine glycan.

It belongs to the glycosyltransferase 47 family. Limited to xylem cells. Expressed in the root tip, xylem cells of roots, and in the vasculature of roots, cotyledons and leaves.

The protein resides in the golgi apparatus membrane. Involved in the synthesis of the hemicellulose glucuronoxylan, a major component of secondary cell walls. Probably involved in the elongation of glucuronoxylan xylosyl backbone, especially in the formation of GlcUA side chain of xylans. In Arabidopsis thaliana (Mouse-ear cress), this protein is Probable beta-1,4-xylosyltransferase IRX10 (IRX10).